A 319-amino-acid chain; its full sequence is Acetyl esterase (319 aa).

Residues 91–93 (HGG) carry the Involved in the stabilization of the negatively charged intermediate by the formation of the oxyanion hole motif. Active-site residues include Ser165, Asp262, and His292.

This sequence belongs to the 'GDXG' lipolytic enzyme family. In terms of assembly, homodimer. Interacts with MalT and MelA.

It is found in the cytoplasm. Functionally, displays esterase activity towards short chain fatty esters (acyl chain length of up to 8 carbons). Able to hydrolyze triacetylglycerol (triacetin) and tributyrylglycerol (tributyrin), but not trioleylglycerol (triolein) or cholesterol oleate. Negatively regulates MalT activity by antagonizing maltotriose binding. Inhibits MelA galactosidase activity. In Shigella flexneri, this protein is Acetyl esterase.